Reading from the N-terminus, the 87-residue chain is U3-theraphotoxin-Hhn1a 18 (87 aa).

The first 24 residues, 1–24, serve as a signal peptide directing secretion; the sequence is MVNTKASMFLTFAGLVLLFVVCYA. Residues 25 to 52 constitute a propeptide that is removed on maturation; the sequence is SESEEKEFPKEMLSSIFAVDNDFKQEER. 3 disulfide bridges follow: C54–C67, C61–C72, and C66–C79.

Belongs to the neurotoxin 10 (Hwtx-1) family. 51 (Hntx-8) subfamily. Hntx-8 sub-subfamily. As to expression, expressed by the venom gland.

The protein localises to the secreted. Its function is as follows. Ion channel inhibitor. The protein is U3-theraphotoxin-Hhn1a 18 of Cyriopagopus hainanus (Chinese bird spider).